Consider the following 763-residue polypeptide: Phosphoglycerol transferase I (763 aa).

A run of 4 helical transmembrane segments spans residues 1 to 21 (MSEL…AWKA), 26 to 46 (WWFA…ITLF), 77 to 97 (ILPG…LGWI), and 108 to 128 (FGYS…SPAF).

Belongs to the OpgB family.

The protein resides in the cell inner membrane. It catalyses the reaction a phosphatidylglycerol + a membrane-derived-oligosaccharide D-glucose = a 1,2-diacyl-sn-glycerol + a membrane-derived-oligosaccharide 6-(glycerophospho)-D-glucose.. Its pathway is glycan metabolism; osmoregulated periplasmic glucan (OPG) biosynthesis. In terms of biological role, transfers a phosphoglycerol residue from phosphatidylglycerol to the membrane-bound nascent glucan backbones. The polypeptide is Phosphoglycerol transferase I (Escherichia coli (strain 55989 / EAEC)).